The following is a 172-amino-acid chain: 3-hydroxydecanoyl-[acyl-carrier-protein] dehydratase (172 aa).

His-71 is a catalytic residue.

It belongs to the thioester dehydratase family. FabA subfamily. In terms of assembly, homodimer.

Its subcellular location is the cytoplasm. The catalysed reaction is a (3R)-hydroxyacyl-[ACP] = a (2E)-enoyl-[ACP] + H2O. It catalyses the reaction (3R)-hydroxydecanoyl-[ACP] = (2E)-decenoyl-[ACP] + H2O. It carries out the reaction (2E)-decenoyl-[ACP] = (3Z)-decenoyl-[ACP]. The protein operates within lipid metabolism; fatty acid biosynthesis. Its function is as follows. Necessary for the introduction of cis unsaturation into fatty acids. Catalyzes the dehydration of (3R)-3-hydroxydecanoyl-ACP to E-(2)-decenoyl-ACP and then its isomerization to Z-(3)-decenoyl-ACP. Can catalyze the dehydratase reaction for beta-hydroxyacyl-ACPs with saturated chain lengths up to 16:0, being most active on intermediate chain length. This chain is 3-hydroxydecanoyl-[acyl-carrier-protein] dehydratase, found in Pseudoalteromonas atlantica (strain T6c / ATCC BAA-1087).